The sequence spans 303 residues: Dihydroorotate dehydrogenase B (NAD(+)), catalytic subunit (303 aa).

Residues serine 21 and 45-46 (KG) contribute to the FMN site. Residues lysine 45 and 69–73 (NAVGL) contribute to the substrate site. 2 residues coordinate FMN: asparagine 99 and asparagine 127. Residue asparagine 127 participates in substrate binding. The active-site Nucleophile is cysteine 130. 2 residues coordinate FMN: lysine 165 and isoleucine 191. Position 192-193 (192-193 (NT)) interacts with substrate. FMN is bound by residues glycine 217, 243-244 (GG), and 265-266 (GT).

Belongs to the dihydroorotate dehydrogenase family. Type 1 subfamily. Heterotetramer of 2 PyrK and 2 PyrD type B subunits. FMN is required as a cofactor.

It localises to the cytoplasm. It carries out the reaction (S)-dihydroorotate + NAD(+) = orotate + NADH + H(+). The protein operates within pyrimidine metabolism; UMP biosynthesis via de novo pathway; orotate from (S)-dihydroorotate (NAD(+) route): step 1/1. Functionally, catalyzes the conversion of dihydroorotate to orotate with NAD(+) as electron acceptor. The chain is Dihydroorotate dehydrogenase B (NAD(+)), catalytic subunit (pyrD) from Bacteroides thetaiotaomicron (strain ATCC 29148 / DSM 2079 / JCM 5827 / CCUG 10774 / NCTC 10582 / VPI-5482 / E50).